The sequence spans 340 residues: NADH-quinone oxidoreductase subunit H 2 (340 aa).

8 helical membrane-spanning segments follow: residues leucine 10–leucine 30, phenylalanine 84–isoleucine 104, valine 126–glycine 146, methionine 172–valine 192, valine 198–glutamate 218, valine 255–isoleucine 275, methionine 279–phenylalanine 299, and valine 318–alanine 338.

This sequence belongs to the complex I subunit 1 family. As to quaternary structure, NDH-1 is composed of 14 different subunits. Subunits NuoA, H, J, K, L, M, N constitute the membrane sector of the complex.

The protein resides in the cell inner membrane. It catalyses the reaction a quinone + NADH + 5 H(+)(in) = a quinol + NAD(+) + 4 H(+)(out). Its function is as follows. NDH-1 shuttles electrons from NADH, via FMN and iron-sulfur (Fe-S) centers, to quinones in the respiratory chain. The immediate electron acceptor for the enzyme in this species is believed to be ubiquinone. Couples the redox reaction to proton translocation (for every two electrons transferred, four hydrogen ions are translocated across the cytoplasmic membrane), and thus conserves the redox energy in a proton gradient. This subunit may bind ubiquinone. The chain is NADH-quinone oxidoreductase subunit H 2 from Rhizobium etli (strain ATCC 51251 / DSM 11541 / JCM 21823 / NBRC 15573 / CFN 42).